Reading from the N-terminus, the 1679-residue chain is Protein MLP2 (1679 aa).

Coiled-coil stretches lie at residues 32 to 176, 233 to 466, 516 to 1064, and 1099 to 1491; these read AKFE…KYDT, YNKF…RQVK, FSNV…EREL, and KLVS…ENAG. Short sequence motifs (bipartite nuclear localization signal) lie at residues 417–433, 639–655, and 1433–1449; these read KRSTELLETVSLTKRKQ, RKELLIYKKSQCKKKTT, and KKEWLKEYEDETLRRIK. 2 disordered regions span residues 1495-1521 and 1632-1679; these read FLDNKGSGEDAEEELWNSPSKGNSERP and DLTN…ASNE. 2 stretches are compositionally biased toward polar residues: residues 1511 to 1520 and 1646 to 1661; these read NSPSKGNSER and IGSTSKRPIESGTSSD. Phosphoserine is present on serine 1512. Basic and acidic residues predominate over residues 1662 to 1671; sequence PDTKKVKESP. A Phosphoserine modification is found at serine 1670.

As to quaternary structure, component of the nuclear complex (NPC). NPC constitutes the exclusive means of nucleocytoplasmic transport. NPCs allow the passive diffusion of ions and small molecules and the active, nuclear transport receptor-mediated bidirectional transport of macromolecules such as proteins, RNAs, ribonucleoparticles (RNPs), and ribosomal subunits across the nuclear envelope. Due to its 8-fold rotational symmetry, all subunits are present with 8 copies or multiples thereof. Interacts with NUP60 and NIC96, which tether it to the nuclear pore complex. Component of the spindle pole body core in which it interacts directly with SPC110, SPC42 and SPC29. Also interacts with YKU70 (HDF1) and MLP1.

The protein localises to the nucleus. It localises to the cytoplasm. Its subcellular location is the cytoskeleton. The protein resides in the microtubule organizing center. It is found in the spindle pole body. The protein localises to the nuclear pore complex. In terms of biological role, together with the closely related MLP1, involved in the structural and functional organization of perinuclear chromatin. MLP1/MLP2 associate with the nuclear pore complex and form filamentous structures along the nuclear periphery. Has a role in the localization of Esc1 to nucleolar regions. Together with MLP1, mediates tethering of the some telomeres to the nuclear periphery, probably mediated by YKU70/YKU80 (HDF1/HDF2) heterodimer and show perinuclear location dependent silencing. MLP1 and MLP2 are involved in telomere length regulation but not silencing or telomere anchoring. Plays a role in the incorporation of components into the spindle pole body. Involved in double-strand break repair, probably also mediated by the YKU70/YKU80 (HDF1/HDF2) heterodimer. In Saccharomyces cerevisiae (strain ATCC 204508 / S288c) (Baker's yeast), this protein is Protein MLP2 (MLP2).